Consider the following 195-residue polypeptide: MSFRQRILEHRLEDSLEKLFSAFLSFCLEYHIPYAETISKQNHSIVAVTFDETYGLDIYQTMKERLPLDKQFYYINRKTDTYTIRGYDVAVRALEELATVISPLEILDKIHIFNISFVRSTNILYLGYTKIIKLSTVYSAVYQNKLYRLFAIYNRDITMLSRIRKYIITDYPKLFEQYFSLLPKFITDNYEVEQT.

This is an uncharacterized protein from Acidianus hospitalis (AFV-1).